Here is a 213-residue protein sequence, read N- to C-terminus: uncharacterized protein (213 aa).

This is an uncharacterized protein from Escherichia coli (strain UTI89 / UPEC).